We begin with the raw amino-acid sequence, 417 residues long: NADH-dependent phenylglyoxylate dehydrogenase subunit alpha (417 aa).

In terms of assembly, dimer of heteropentamers composed of an alpha (PadG), a beta (PadI), a gamma (PadE), a delta (PadF) and an epsilon (PadH) subunit.

The catalysed reaction is phenylglyoxylate + NAD(+) + CoA = benzoyl-CoA + CO2 + NADH. Its activity is regulated as follows. Activated by magnesium ions and thiamine diphosphate. Involved in the anaerobic metabolism of phenylalanine and phenylacetate. Catalyzes the oxidative decarboxylation of phenylglyoxylate to benzoyl-CoA and CO(2). It can also react slowly with 2-oxo-3-methylbutanoate and use different electron acceptors such as benzyl viologen, methyl viologen, FAD or FMN, but NAD seems to be the physiological electron acceptor. Also catalyzes an isotope exchange between CO(2) and the carboxyl group which proves partial or complete reversibility of the oxidative decarboxylation reaction. The polypeptide is NADH-dependent phenylglyoxylate dehydrogenase subunit alpha (padG) (Aromatoleum evansii (Azoarcus evansii)).